The chain runs to 193 residues: MACSKMDVDKQCCICLDDEDVDRDNTIPCRHTVCRTCYVKPMLDQCPVCREPWEARKNDESAEEYTGRHYFHTYRNGGYRGVPRFESTWGLSIDEERWQNYVQHIRPLYQGFLDERIIFENPIPVNMEYPLWEDIPHTRYLWTILKSIIINAKKIVKDVTNVPPFSPEVLEQFDDFFHEEPSRDKCTFPLRSQ.

The RING-type zinc finger occupies 12–50 (CCICLDDEDVDRDNTIPCRHTVCRTCYVKPMLDQCPVCR).

This Magallana gigas (Pacific oyster) protein is Putative RING finger protein ORF38.